We begin with the raw amino-acid sequence, 162 residues long: HTH-type transcriptional regulator IscR (162 aa).

Residues 2-131 (RLTSKGRYAV…NNITLGELVN (130 aa)) enclose the HTH rrf2-type domain. A DNA-binding region (H-T-H motif) is located at residues 28 to 51 (LADISERQGISLSYLEQLFSRLRK). Residues Cys92, Cys98, and Cys104 each contribute to the [2Fe-2S] cluster site. The interval 140–162 (GRQHTHDAPRTRTQDAIDVKLRA) is disordered. Over residues 143-162 (HTHDAPRTRTQDAIDVKLRA) the composition is skewed to basic and acidic residues.

[2Fe-2S] cluster is required as a cofactor.

Its function is as follows. Regulates the transcription of several operons and genes involved in the biogenesis of Fe-S clusters and Fe-S-containing proteins. This Shigella flexneri protein is HTH-type transcriptional regulator IscR.